Consider the following 68-residue polypeptide: Alpha-conotoxin Lp1.4 (68 aa).

The N-terminal stretch at methionine 1–serine 21 is a signal peptide. Positions phenylalanine 22–arginine 48 are excised as a propeptide. Cystine bridges form between cysteine 50/cysteine 56 and cysteine 51/cysteine 64. Positions serine 52 to proline 54 are ser-Xaa-Pro motif, crucial for potent interaction with nAChR. Aspartate 65 carries the aspartic acid 1-amide modification.

It belongs to the conotoxin A superfamily. In terms of tissue distribution, expressed by the venom duct.

It is found in the secreted. Alpha-conotoxins act on postsynaptic membranes, they bind to the nicotinic acetylcholine receptors (nAChR) and thus inhibit them. This toxin inhibits mouse muscle alpha-1-beta-1-gamma-delta (CHRNA1-CHRNB1-CHRNG-CHRND), and weakly rat neuronal alpha-6/alpha-3-beta-2 (CHRNA6/CHRNA3-CHRNB2). This chain is Alpha-conotoxin Lp1.4, found in Conus leopardus (Leopard cone).